The chain runs to 394 residues: Subtilisin-like protease CPC735_005570 (394 aa).

Positions 1-21 are cleaved as a signal peptide; sequence MRAIISVALFLSLSLLSAVNA. A propeptide spanning residues 22–114 is cleaved from the precursor; the sequence is AEILSAGDTD…IEHDRIANAR (93 aa). Residues 37 to 110 enclose the Inhibitor I9 domain; the sequence is SYIVVMRDGL…AVKYIEHDRI (74 aa). The 272-residue stretch at 123–394 folds into the Peptidase S8 domain; that stretch reads GWNLARISHK…RLLLYNGSGR (272 aa). Active-site charge relay system residues include D155 and H186. N-linked (GlcNAc...) asparagine glycans are attached at residues N216 and N247. S340 acts as the Charge relay system in catalysis. N382 and N390 each carry an N-linked (GlcNAc...) asparagine glycan.

It belongs to the peptidase S8 family.

It is found in the secreted. In terms of biological role, secreted subtilisin-like serine protease with keratinolytic activity that contributes to pathogenicity. In Coccidioides posadasii (strain C735) (Valley fever fungus), this protein is Subtilisin-like protease CPC735_005570.